The sequence spans 213 residues: Uridine kinase (213 aa).

Residue 15-22 participates in ATP binding; the sequence is GASASGKS.

This sequence belongs to the uridine kinase family.

It localises to the cytoplasm. It carries out the reaction uridine + ATP = UMP + ADP + H(+). The enzyme catalyses cytidine + ATP = CMP + ADP + H(+). The protein operates within pyrimidine metabolism; CTP biosynthesis via salvage pathway; CTP from cytidine: step 1/3. It functions in the pathway pyrimidine metabolism; UMP biosynthesis via salvage pathway; UMP from uridine: step 1/1. In Escherichia fergusonii (strain ATCC 35469 / DSM 13698 / CCUG 18766 / IAM 14443 / JCM 21226 / LMG 7866 / NBRC 102419 / NCTC 12128 / CDC 0568-73), this protein is Uridine kinase.